A 146-amino-acid polypeptide reads, in one-letter code: Probable cyclic pyranopterin monophosphate synthase (146 aa).

Substrate-binding positions include L66–H68 and M102–E103. Residue D117 is part of the active site.

Belongs to the MoaC family. As to quaternary structure, homohexamer; trimer of dimers.

The enzyme catalyses (8S)-3',8-cyclo-7,8-dihydroguanosine 5'-triphosphate = cyclic pyranopterin phosphate + diphosphate. It participates in cofactor biosynthesis; molybdopterin biosynthesis. Its function is as follows. Catalyzes the conversion of (8S)-3',8-cyclo-7,8-dihydroguanosine 5'-triphosphate to cyclic pyranopterin monophosphate (cPMP). This Aeropyrum pernix (strain ATCC 700893 / DSM 11879 / JCM 9820 / NBRC 100138 / K1) protein is Probable cyclic pyranopterin monophosphate synthase.